The chain runs to 412 residues: DnaJ homolog subfamily A member 2 (412 aa).

In terms of domain architecture, J spans 8–70; sequence KLYDILGVPP…EKRELYDRYG (63 aa). K39 is subject to N6-acetyllysine. Phosphoserine occurs at positions 78 and 123. The CR-type zinc finger occupies 130 to 214; the sequence is GKTTKLQLSK…CEGKKVIKEV (85 aa). K134 is covalently cross-linked (Glycyl lysine isopeptide (Lys-Gly) (interchain with G-Cter in SUMO2)). Zn(2+) is bound by residues C143 and C146. The stretch at 143-150 is one CXXCXGXG motif repeat; sequence CSACSGQG. An N6-acetyllysine modification is found at K152. C159, C162, C186, C189, C202, and C205 together coordinate Zn(2+). CXXCXGXG motif repeat units lie at residues 159–166, 186–193, and 202–209; these read CSACRGRG, CSDCNGEG, and CKKCEGKK. The disordered stretch occupies residues 365–412; the sequence is IGETEEVELQEFDSTRGSGGGQRREAYNDSSDEESSSHHGPGVQCAHQ. Residue Y391 is modified to Phosphotyrosine. Phosphoserine is present on residues S394 and S395. C409 bears the Cysteine methyl ester mark. The S-farnesyl cysteine moiety is linked to residue C409. Residues 410–412 constitute a propeptide, removed in mature form; the sequence is AHQ.

It is found in the membrane. Functionally, co-chaperone of Hsc70. Stimulates ATP hydrolysis and the folding of unfolded proteins mediated by HSPA1A/B (in vitro). This is DnaJ homolog subfamily A member 2 (DNAJA2) from Homo sapiens (Human).